Consider the following 486-residue polypeptide: Malonate-semialdehyde dehydrogenase 2 (486 aa).

NAD(+) is bound by residues Phe-154, Lys-178, Glu-181, Arg-182, and Ser-231. The Nucleophile role is filled by Cys-286. NAD(+) is bound at residue Glu-385.

Belongs to the aldehyde dehydrogenase family. IolA subfamily. In terms of assembly, homotetramer.

The enzyme catalyses 3-oxopropanoate + NAD(+) + CoA + H2O = hydrogencarbonate + acetyl-CoA + NADH + H(+). It carries out the reaction 2-methyl-3-oxopropanoate + NAD(+) + CoA + H2O = propanoyl-CoA + hydrogencarbonate + NADH + H(+). It functions in the pathway polyol metabolism; myo-inositol degradation into acetyl-CoA; acetyl-CoA from myo-inositol: step 7/7. Catalyzes the oxidation of malonate semialdehyde (MSA) and methylmalonate semialdehyde (MMSA) into acetyl-CoA and propanoyl-CoA, respectively. Is involved in a myo-inositol catabolic pathway. Bicarbonate, and not CO2, is the end-product of the enzymatic reaction. The chain is Malonate-semialdehyde dehydrogenase 2 from Shouchella clausii (strain KSM-K16) (Alkalihalobacillus clausii).